The following is a 238-amino-acid chain: 6-phosphogluconolactonase (238 aa).

The protein belongs to the glucosamine/galactosamine-6-phosphate isomerase family. 6-phosphogluconolactonase subfamily.

It carries out the reaction 6-phospho-D-glucono-1,5-lactone + H2O = 6-phospho-D-gluconate + H(+). Its pathway is carbohydrate degradation; pentose phosphate pathway; D-ribulose 5-phosphate from D-glucose 6-phosphate (oxidative stage): step 2/3. Functionally, hydrolysis of 6-phosphogluconolactone to 6-phosphogluconate. The chain is 6-phosphogluconolactonase (pgl) from Mesorhizobium japonicum (strain LMG 29417 / CECT 9101 / MAFF 303099) (Mesorhizobium loti (strain MAFF 303099)).